A 309-amino-acid chain; its full sequence is HPr kinase/phosphorylase (309 aa).

Residues histidine 138 and lysine 159 contribute to the active site. 153–160 (GASGIGKS) is an ATP binding site. Residue serine 160 coordinates Mg(2+). Aspartate 177 (proton acceptor; for phosphorylation activity. Proton donor; for dephosphorylation activity) is an active-site residue. Positions 201 to 210 (IEIRGVGIID) are important for the catalytic mechanism of both phosphorylation and dephosphorylation. A Mg(2+)-binding site is contributed by glutamate 202. Residue arginine 243 is part of the active site. The segment at 264-269 (PVKTGR) is important for the catalytic mechanism of dephosphorylation.

This sequence belongs to the HPrK/P family. Homohexamer. Mg(2+) serves as cofactor.

The catalysed reaction is [HPr protein]-L-serine + ATP = [HPr protein]-O-phospho-L-serine + ADP + H(+). It carries out the reaction [HPr protein]-O-phospho-L-serine + phosphate + H(+) = [HPr protein]-L-serine + diphosphate. Functionally, catalyzes the ATP- as well as the pyrophosphate-dependent phosphorylation of a specific serine residue in HPr, a phosphocarrier protein of the phosphoenolpyruvate-dependent sugar phosphotransferase system (PTS). HprK/P also catalyzes the pyrophosphate-producing, inorganic phosphate-dependent dephosphorylation (phosphorolysis) of seryl-phosphorylated HPr (P-Ser-HPr). The two antagonistic activities of HprK/P are regulated by several intracellular metabolites, which change their concentration in response to the absence or presence of rapidly metabolisable carbon sources (glucose, fructose, etc.) in the growth medium. Therefore, by controlling the phosphorylation state of HPr, HPrK/P is a sensor enzyme that plays a major role in the regulation of carbon metabolism and sugar transport: it mediates carbon catabolite repression (CCR), and regulates PTS-catalyzed carbohydrate uptake and inducer exclusion. This Lactococcus lactis subsp. lactis (strain IL1403) (Streptococcus lactis) protein is HPr kinase/phosphorylase.